A 557-amino-acid polypeptide reads, in one-letter code: 2-succinyl-5-enolpyruvyl-6-hydroxy-3-cyclohexene-1-carboxylate synthase (557 aa).

It belongs to the TPP enzyme family. MenD subfamily. In terms of assembly, homodimer. It depends on Mg(2+) as a cofactor. The cofactor is Mn(2+). Thiamine diphosphate is required as a cofactor.

The enzyme catalyses isochorismate + 2-oxoglutarate + H(+) = 5-enolpyruvoyl-6-hydroxy-2-succinyl-cyclohex-3-ene-1-carboxylate + CO2. Its pathway is quinol/quinone metabolism; 1,4-dihydroxy-2-naphthoate biosynthesis; 1,4-dihydroxy-2-naphthoate from chorismate: step 2/7. The protein operates within quinol/quinone metabolism; menaquinone biosynthesis. Functionally, catalyzes the thiamine diphosphate-dependent decarboxylation of 2-oxoglutarate and the subsequent addition of the resulting succinic semialdehyde-thiamine pyrophosphate anion to isochorismate to yield 2-succinyl-5-enolpyruvyl-6-hydroxy-3-cyclohexene-1-carboxylate (SEPHCHC). In Phocaeicola vulgatus (strain ATCC 8482 / DSM 1447 / JCM 5826 / CCUG 4940 / NBRC 14291 / NCTC 11154) (Bacteroides vulgatus), this protein is 2-succinyl-5-enolpyruvyl-6-hydroxy-3-cyclohexene-1-carboxylate synthase.